The primary structure comprises 315 residues: Aspartate carbamoyltransferase catalytic subunit (315 aa).

Residues Arg54 and Thr55 each contribute to the carbamoyl phosphate site. Lys82 provides a ligand contact to L-aspartate. Carbamoyl phosphate-binding residues include Arg104, His134, and Gln137. L-aspartate-binding residues include Arg174 and Arg229. Residues Gly270 and Pro271 each contribute to the carbamoyl phosphate site.

This sequence belongs to the aspartate/ornithine carbamoyltransferase superfamily. ATCase family. In terms of assembly, heterododecamer (2C3:3R2) of six catalytic PyrB chains organized as two trimers (C3), and six regulatory PyrI chains organized as three dimers (R2).

It carries out the reaction carbamoyl phosphate + L-aspartate = N-carbamoyl-L-aspartate + phosphate + H(+). The protein operates within pyrimidine metabolism; UMP biosynthesis via de novo pathway; (S)-dihydroorotate from bicarbonate: step 2/3. Its function is as follows. Catalyzes the condensation of carbamoyl phosphate and aspartate to form carbamoyl aspartate and inorganic phosphate, the committed step in the de novo pyrimidine nucleotide biosynthesis pathway. This is Aspartate carbamoyltransferase catalytic subunit from Leifsonia xyli subsp. xyli (strain CTCB07).